A 236-amino-acid polypeptide reads, in one-letter code: Sugar fermentation stimulation protein homolog (236 aa).

This sequence belongs to the SfsA family.

The sequence is that of Sugar fermentation stimulation protein homolog from Pseudomonas fluorescens (strain SBW25).